The chain runs to 407 residues: Phosphopentomutase (407 aa).

Residues Asp10, Asp307, His312, Asp348, His349, and His360 each contribute to the Mn(2+) site.

Belongs to the phosphopentomutase family. The cofactor is Mn(2+).

The protein resides in the cytoplasm. The catalysed reaction is 2-deoxy-alpha-D-ribose 1-phosphate = 2-deoxy-D-ribose 5-phosphate. It catalyses the reaction alpha-D-ribose 1-phosphate = D-ribose 5-phosphate. It functions in the pathway carbohydrate degradation; 2-deoxy-D-ribose 1-phosphate degradation; D-glyceraldehyde 3-phosphate and acetaldehyde from 2-deoxy-alpha-D-ribose 1-phosphate: step 1/2. Functionally, isomerase that catalyzes the conversion of deoxy-ribose 1-phosphate (dRib-1-P) and ribose 1-phosphate (Rib-1-P) to deoxy-ribose 5-phosphate (dRib-5-P) and ribose 5-phosphate (Rib-5-P), respectively. The protein is Phosphopentomutase of Methylobacterium nodulans (strain LMG 21967 / CNCM I-2342 / ORS 2060).